The primary structure comprises 1410 residues: DNA-directed RNA polymerase subunit beta' (1410 aa).

Zn(2+)-binding residues include C70, C72, C85, and C88. Positions 460, 462, and 464 each coordinate Mg(2+). Zn(2+) contacts are provided by C814, C888, C895, and C898.

This sequence belongs to the RNA polymerase beta' chain family. As to quaternary structure, the RNAP catalytic core consists of 2 alpha, 1 beta, 1 beta' and 1 omega subunit. When a sigma factor is associated with the core the holoenzyme is formed, which can initiate transcription. Mg(2+) serves as cofactor. Requires Zn(2+) as cofactor.

It catalyses the reaction RNA(n) + a ribonucleoside 5'-triphosphate = RNA(n+1) + diphosphate. Functionally, DNA-dependent RNA polymerase catalyzes the transcription of DNA into RNA using the four ribonucleoside triphosphates as substrates. This Buchnera aphidicola subsp. Cinara cedri (strain Cc) protein is DNA-directed RNA polymerase subunit beta'.